A 462-amino-acid polypeptide reads, in one-letter code: Fumarate hydratase class II (462 aa).

Substrate contacts are provided by residues 97-99 (SGT), 127-130 (HPND), 137-139 (SSN), and Thr-185. Residue His-186 is the Proton donor/acceptor of the active site. Ser-316 is an active-site residue. Residues Ser-317 and 322–324 (KVN) contribute to the substrate site.

It belongs to the class-II fumarase/aspartase family. Fumarase subfamily. In terms of assembly, homotetramer.

It is found in the cytoplasm. The catalysed reaction is (S)-malate = fumarate + H2O. The protein operates within carbohydrate metabolism; tricarboxylic acid cycle; (S)-malate from fumarate: step 1/1. Functionally, involved in the TCA cycle. Catalyzes the stereospecific interconversion of fumarate to L-malate. In Halalkalibacterium halodurans (strain ATCC BAA-125 / DSM 18197 / FERM 7344 / JCM 9153 / C-125) (Bacillus halodurans), this protein is Fumarate hydratase class II.